The following is a 484-amino-acid chain: Acid alpha-amylase (484 aa).

N-linked (GlcNAc...) asparagine glycosylation occurs at Asn24. The cysteines at positions 30 and 38 are disulfide-linked. Trp83 lines the substrate pocket. Asp121 contacts Ca(2+). His122 provides a ligand contact to substrate. Cysteines 150 and 164 form a disulfide. N-linked (GlcNAc...) asparagine glycosylation occurs at Asn157. Positions 162 and 175 each coordinate Ca(2+). Residue Asn197 is glycosylated (N-linked (GlcNAc...) asparagine). Arg204 is a substrate binding site. Residues Asp206, Glu210, and Glu230 each coordinate Ca(2+). Asp206 functions as the Nucleophile in the catalytic mechanism. 209 to 210 (LE) provides a ligand contact to substrate. The Proton donor role is filled by Glu230. Position 234 (Gly234) interacts with substrate. The cysteines at positions 240 and 283 are disulfide-linked. Substrate contacts are provided by Asp297 and Arg344. A disulfide bridge connects residues Cys440 and Cys475.

This sequence belongs to the glycosyl hydrolase 13 family. As to quaternary structure, monomer. Ca(2+) is required as a cofactor.

It is found in the secreted. The enzyme catalyses Endohydrolysis of (1-&gt;4)-alpha-D-glucosidic linkages in polysaccharides containing three or more (1-&gt;4)-alpha-linked D-glucose units.. This chain is Acid alpha-amylase, found in Aspergillus niger.